A 244-amino-acid polypeptide reads, in one-letter code: tRNA (guanine-N(7)-)-methyltransferase (244 aa).

The S-adenosyl-L-methionine site is built by Glu-75, Glu-100, Asp-127, and Asp-150. The active site involves Asp-150. Substrate-binding positions include Lys-154, Asp-186, and 223 to 226 (TRFE).

The protein belongs to the class I-like SAM-binding methyltransferase superfamily. TrmB family.

The enzyme catalyses guanosine(46) in tRNA + S-adenosyl-L-methionine = N(7)-methylguanosine(46) in tRNA + S-adenosyl-L-homocysteine. It participates in tRNA modification; N(7)-methylguanine-tRNA biosynthesis. In terms of biological role, catalyzes the formation of N(7)-methylguanine at position 46 (m7G46) in tRNA. This is tRNA (guanine-N(7)-)-methyltransferase from Xylella fastidiosa (strain 9a5c).